The primary structure comprises 168 residues: HTH-type transcriptional regulator IscR (168 aa).

The HTH rrf2-type domain occupies 2–131 (KLTSKGRYAV…NNITLGELMT (130 aa)). The segment at residues 28-51 (LADISERQGISLSYLEQLFSKLRK) is a DNA-binding region (H-T-H motif). [2Fe-2S] cluster contacts are provided by cysteine 92, cysteine 98, and cysteine 104.

The cofactor is [2Fe-2S] cluster.

Functionally, regulates the transcription of several operons and genes involved in the biogenesis of Fe-S clusters and Fe-S-containing proteins. This Vibrio parahaemolyticus serotype O3:K6 (strain RIMD 2210633) protein is HTH-type transcriptional regulator IscR.